The primary structure comprises 156 residues: Transcription antitermination protein NusB (156 aa).

Belongs to the NusB family.

Involved in transcription antitermination. Required for transcription of ribosomal RNA (rRNA) genes. Binds specifically to the boxA antiterminator sequence of the ribosomal RNA (rrn) operons. The sequence is that of Transcription antitermination protein NusB from Rickettsia massiliae (strain Mtu5).